A 307-amino-acid polypeptide reads, in one-letter code: Ribosomal RNA large subunit methyltransferase F (307 aa).

Belongs to the methyltransferase superfamily. METTL16/RlmF family.

It is found in the cytoplasm. The catalysed reaction is adenosine(1618) in 23S rRNA + S-adenosyl-L-methionine = N(6)-methyladenosine(1618) in 23S rRNA + S-adenosyl-L-homocysteine + H(+). Functionally, specifically methylates the adenine in position 1618 of 23S rRNA. The protein is Ribosomal RNA large subunit methyltransferase F of Bacteroides thetaiotaomicron (strain ATCC 29148 / DSM 2079 / JCM 5827 / CCUG 10774 / NCTC 10582 / VPI-5482 / E50).